A 394-amino-acid chain; its full sequence is Elongation factor Tu (394 aa).

The 195-residue stretch at 10-204 folds into the tr-type G domain; it reads LPHVNIGTIG…AVDEYIPTPT (195 aa). Residues 19 to 26 form a G1 region; sequence GHVDHGKT. 19 to 26 contacts GTP; sequence GHVDHGKT. Thr26 is a binding site for Mg(2+). The segment at 60–64 is G2; the sequence is GITIN. The G3 stretch occupies residues 81–84; sequence DCPG. GTP contacts are provided by residues 81-85 and 136-139; these read DCPGH and NKCD. Positions 136-139 are G4; the sequence is NKCD. The tract at residues 174–176 is G5; it reads SAL.

This sequence belongs to the TRAFAC class translation factor GTPase superfamily. Classic translation factor GTPase family. EF-Tu/EF-1A subfamily. As to quaternary structure, monomer.

It is found in the cytoplasm. The catalysed reaction is GTP + H2O = GDP + phosphate + H(+). GTP hydrolase that promotes the GTP-dependent binding of aminoacyl-tRNA to the A-site of ribosomes during protein biosynthesis. This is Elongation factor Tu from Mesoplasma florum (strain ATCC 33453 / NBRC 100688 / NCTC 11704 / L1) (Acholeplasma florum).